A 281-amino-acid polypeptide reads, in one-letter code: Urease accessory protein UreD (281 aa).

Residues 1 to 25 (MLNTLEPQPCETDALSPRLQRSTGS) are disordered.

This sequence belongs to the UreD family. UreD, UreF and UreG form a complex that acts as a GTP-hydrolysis-dependent molecular chaperone, activating the urease apoprotein by helping to assemble the nickel containing metallocenter of UreC. The UreE protein probably delivers the nickel.

The protein localises to the cytoplasm. In terms of biological role, required for maturation of urease via the functional incorporation of the urease nickel metallocenter. The chain is Urease accessory protein UreD from Dinoroseobacter shibae (strain DSM 16493 / NCIMB 14021 / DFL 12).